A 1460-amino-acid chain; its full sequence is Venom prothrombin activator omicarin-C non-catalytic subunit (1460 aa).

The signal sequence occupies residues 1–30 (MGRYSVSPVPKCLLLMFLGWSGLKYYQVNA). Plastocyanin-like domains lie at 32–196 (QLRE…LLIC), 206–330 (AQKF…LNIK), 351–529 (MNWE…LLVC), and 539–685 (VQNK…FLDA). F5/8 type A domains are found at residues 32–330 (QLRE…LNIK) and 350–685 (IMNW…FLDA). Ca(2+)-binding residues include K124, E139, D142, and D143. Residue N156 is glycosylated (N-linked (GlcNAc...) asparagine). Residues C170 and C196 are joined by a disulfide bond. N-linked (GlcNAc...) asparagine glycosylation is found at N242, N300, N385, N406, and N471. C251 and C332 are disulfide-bonded. An intrachain disulfide couples C503 to C529. N557 carries an N-linked (GlcNAc...) asparagine glycan. Cystine bridges form between C672-C1031, C965-C991, C1147-C1298, and C1303-C1457. A b region spans residues 693-817 (GNEEEEEDDG…SDDIAGRYLR (125 aa)). Residues 740 to 760 (LLDDEDNPEQSRSEQTEDDEE) form a disordered region. Residues 772–817 (SFKGSVAEEELKHTALALEEDAHASDPRIDSNSARNSDDIAGRYLR) constitute a propeptide, activation peptide (connecting region). Plastocyanin-like domains are found at residues 823–991 (NKRR…ILIC) and 1000–1143 (NRTI…FTVI). An F5/8 type A 3 domain is found at 823 to 1143 (NKRRYYIAAE…RGMQALFTVI (321 aa)). Residues K919, F934, D937, and D938 each coordinate Ca(2+). A glycan (N-linked (GlcNAc...) asparagine) is linked at N943. N1000, N1180, and N1397 each carry an N-linked (GlcNAc...) asparagine glycan. 2 consecutive F5/8 type C domains span residues 1147–1298 (CKLP…LLGC) and 1303–1457 (CSVP…LFGC).

It belongs to the multicopper oxidase family. Heterodimer of a light and a heavy chains; non-disulfide-linked. The interaction between the two chains is calcium-dependent. Found in its active form associated with omicarin-C catalytic subunit (AC Q58L95). Post-translationally, in physiological conditions, blood coagulation factor V and factor Va are inactivated by activated protein C (APC) through proteolytic degradation of the heavy chain. However, omicarin-C non-catalytic subunit (factor V-like protein) retains its full activity even at high concentration of APC. This has two explanations: this protein has only one of the three cleavage sites present in factor V that are targeted by the APC for inactivation, and the binding with the catalytic subunit protect the cleavage site from inactivation. Expressed by the venom gland.

It is found in the secreted. In terms of biological role, snake prothrombin activator that attacks the hemostatic system of prey. This non-catalytic subunit is functionally similar to blood coagulation factor V. It serves as a critical cofactor for the prothrombinase activity of the catalytic subunit, which is similar to the blood coagulation factor X. The complex converts prothrombin to thrombin by sequential cleavage at two positions, Arg-320 followed by Arg-271. Cleavage at Arg-320 produces an active intermediate known as meizothrombin. Meizothrombin is the 'second' substrate for prothrombinase, and it docks in an altered manner to present the second cleavage site (271). Cleavage at Arg-271 releases active thrombin from its pro-fragment. This order of events is reversed if the protease component of prothrombinase is used on its own, suggesting that the 271 site is inherently more accessible to proteolysis. This chain is Venom prothrombin activator omicarin-C non-catalytic subunit, found in Oxyuranus microlepidotus (Inland taipan).